Reading from the N-terminus, the 215-residue chain is FMN-dependent NADH:quinone oxidoreductase (215 aa).

An FMN-binding site is contributed by 17–19 (SAS).

It belongs to the azoreductase type 1 family. As to quaternary structure, homodimer. Requires FMN as cofactor.

The enzyme catalyses 2 a quinone + NADH + H(+) = 2 a 1,4-benzosemiquinone + NAD(+). The catalysed reaction is N,N-dimethyl-1,4-phenylenediamine + anthranilate + 2 NAD(+) = 2-(4-dimethylaminophenyl)diazenylbenzoate + 2 NADH + 2 H(+). In terms of biological role, quinone reductase that provides resistance to thiol-specific stress caused by electrophilic quinones. Also exhibits azoreductase activity. Catalyzes the reductive cleavage of the azo bond in aromatic azo compounds to the corresponding amines. This Clostridium botulinum (strain Alaska E43 / Type E3) protein is FMN-dependent NADH:quinone oxidoreductase.